The sequence spans 199 residues: Chaperone protein TorD (199 aa).

Belongs to the TorD/DmsD family. TorD subfamily.

The protein resides in the cytoplasm. Its function is as follows. Involved in the biogenesis of TorA. Acts on TorA before the insertion of the molybdenum cofactor and, as a result, probably favors a conformation of the apoenzyme that is competent for acquiring the cofactor. This is Chaperone protein TorD from Actinobacillus pleuropneumoniae serotype 7 (strain AP76).